The primary structure comprises 728 residues: Probable 3',5'-cyclic phosphodiesterase pde-5 (728 aa).

A GAF domain is found at 214–371 (SMDAVIIKVM…HHAKLYDKIR (158 aa)). The PDEase domain occupies 390-709 (CNADEVNKLK…KKWEELAEEQ (320 aa)). The active-site Proton donor is the H465. Positions 469, 503, 504, and 614 each coordinate a divalent metal cation. Residues 691 to 728 (MRERCEYNAKKWEELAEEQRKKQEALAQQNGEANETQE) are a coiled coil. Residues 708 to 728 (EQRKKQEALAQQNGEANETQE) are disordered. Over residues 716-728 (LAQQNGEANETQE) the composition is skewed to polar residues.

Belongs to the cyclic nucleotide phosphodiesterase family. A divalent metal cation is required as a cofactor.

It carries out the reaction a nucleoside 3',5'-cyclic phosphate + H2O = a nucleoside 5'-phosphate + H(+). In terms of biological role, redundantly with pde-1, plays a role in the AFD thermosensory neurons to regulate microvilli receptive ending morphology, possibly by regulating cGMP levels. The protein is Probable 3',5'-cyclic phosphodiesterase pde-5 (pde-5) of Caenorhabditis elegans.